The following is a 501-amino-acid chain: Solute carrier family 2, facilitated glucose transporter member 5 (501 aa).

Met-1 carries the post-translational modification N-acetylmethionine. Topologically, residues 1–18 (MEPQDPVKREGRLTPVIV) are cytoplasmic. Residues 19–39 (LATLIAAFGSSFQYGYNVATI) traverse the membrane as a helical segment. Tyr-32 is a D-fructose binding site. Topologically, residues 40–68 (NSPSEFMKDFYNYTYYDRVGEYMNEFYLT) are extracellular. A glycan (N-linked (GlcNAc...) asparagine) is linked at Asn-51. Residues 69 to 91 (LLWSVTVSMFPFGGFLGSLMVGP) form a helical membrane-spanning segment. Residues 92–98 (LVNNLGR) are Cytoplasmic-facing. Residues 99–119 (KGTLLFNNIFSIVPALLMGFS) traverse the membrane as a helical segment. Residues 120 to 126 (DLAKSFE) are Extracellular-facing. The helical transmembrane segment at 127 to 149 (MIIVARVLVGICAGLSSNVVPMY) threads the bilayer. Topologically, residues 150-161 (LGELAPKNWRGA) are cytoplasmic. The chain crosses the membrane as a helical span at residues 162–182 (LGVVPQLFITIGILVAQIFGL). Gln-167 lines the D-fructose pocket. The Extracellular portion of the chain corresponds to 183 to 192 (RSLLANEEGW). The chain crosses the membrane as a helical span at residues 193–213 (PILLGLTGIPAVLQLLFLPFF). Residues 214 to 277 (PESPRYLLIQ…LFKMRSLRWQ (64 aa)) are Cytoplasmic-facing. A helical membrane pass occupies residues 278–298 (VISIIVLMAGQQLSGVNAIYY). D-fructose-binding positions include Gln-288 and 296-298 (IYY). Residues 299-313 (YADQIYLSAGVKEDD) are Extracellular-facing. Residues 314–334 (VQYVTAGTGAVNVLITVCAIF) traverse the membrane as a helical segment. Residues 335 to 342 (VVELMGRR) are Cytoplasmic-facing. Residues 343 to 363 (FLLLLGFSVCFTACCVLTGAL) traverse the membrane as a helical segment. Residues 364–371 (AMQDVISW) lie on the Extracellular side of the membrane. Residues 372-394 (MPYVSIACVISYVIGHALGPSPI) form a helical membrane-spanning segment. Position 387 (His-387) interacts with D-fructose. The Cytoplasmic segment spans residues 395–412 (PALLVTEIFLQSSRPAAY). Residues 413–433 (MVAGTVHWLSNFTVGLVFPFI) form a helical membrane-spanning segment. 419–420 (HW) is a binding site for D-fructose. Over 434-439 (QVGLGA) the chain is Extracellular. A helical membrane pass occupies residues 440 to 460 (YSFVIFAVICFLTTVYIFLII). The Cytoplasmic segment spans residues 461 to 501 (PETKSKTFIEINQIFIKMNKVPGVHPEKEELKEFPPSTARQ).

Belongs to the major facilitator superfamily. Sugar transporter (TC 2.A.1.1) family. Glucose transporter subfamily.

The protein resides in the apical cell membrane. It is found in the cell membrane. Its subcellular location is the sarcolemma. The enzyme catalyses D-fructose(out) = D-fructose(in). In terms of biological role, functions as a fructose transporter that has only low activity with other monosaccharides. Can mediate the uptake of deoxyglucose, but with low efficiency. Essential for fructose uptake in the small intestine. Plays a role in the regulation of salt uptake and blood pressure in response to dietary fructose. Required for the development of high blood pressure in response to high dietary fructose intake. The protein is Solute carrier family 2, facilitated glucose transporter member 5 of Ovis aries (Sheep).